Consider the following 512-residue polypeptide: Cytochrome P450 monooxygenase TwmD (512 aa).

Residue Cys454 coordinates heme.

It belongs to the cytochrome P450 family. Heme is required as a cofactor.

Its pathway is secondary metabolite biosynthesis. Its function is as follows. Cytochrome P450 monooxygenase; part of the gene cluster that mediates the biosynthesis of wortmanamides A and B, reduced long-chain polyketides amidated with a specific omega-amino acid, 5-aminopentanoic acid (5PA). The PKS modules of TwmB are involved in the synthesis of the polyketide backbone, whereas the non-canonical C domain of TwmB is a bonafide condensation domain that specifically selects 5PA and catalyzes amidation to release polyketide chain. The C domain clearly prefers C16 and C18 fatty acyl substrates, which is consistent with simultaneous formation of both octaketide and nonaketide acyl amides wortmanamides A and B. Because TwmB lacks a designated enoylreductase (ER) domain, the required activity is provided the enoyl reductase TwmE. The roles of the remaining enzymes have still to be clarified. The polypeptide is Cytochrome P450 monooxygenase TwmD (Talaromyces wortmannii (Penicillium wortmannii)).